The sequence spans 471 residues: Alpha-galactosidase 1 (471 aa).

Positions 1–18 (MFAFYFLTACISLKGVFG) are cleaved as a signal peptide. An intrachain disulfide couples Cys-42 to Cys-74. The substrate site is built by Asp-72 and Asp-73. Asn-105 carries N-linked (GlcNAc...) asparagine glycosylation. Cys-121 and Cys-151 are disulfide-bonded. Position 147 (Lys-147) interacts with substrate. The active-site Nucleophile is the Asp-149. An N-linked (GlcNAc...) asparagine glycan is attached at Asn-175. Arg-205 provides a ligand contact to substrate. Asp-209 (proton donor) is an active-site residue. Cystine bridges form between Cys-221–Cys-237 and Cys-223–Cys-230. Residue Gln-251 participates in substrate binding. Residues Asn-270, Asn-370, Asn-403, Asn-413, Asn-422, Asn-435, and Asn-454 are each glycosylated (N-linked (GlcNAc...) asparagine).

The protein belongs to the glycosyl hydrolase 27 family. In terms of assembly, homotetramer.

The protein resides in the secreted. It carries out the reaction Hydrolysis of terminal, non-reducing alpha-D-galactose residues in alpha-D-galactosides, including galactose oligosaccharides, galactomannans and galactolipids.. The polypeptide is Alpha-galactosidase 1 (MEL1) (Saccharomyces cerevisiae (Baker's yeast)).